The following is a 447-amino-acid chain: Rab GDP dissociation inhibitor alpha (447 aa).

This sequence belongs to the Rab GDI family. In terms of assembly, interacts with RHOH. Interacts with the non-phosphorylated forms of RAB1A, RAB3A, RAB5A, RAB5B, RAB5C, RAB8A, RAB8B, RAB10, RAB12, RAB35, and RAB43.

The protein resides in the cytoplasm. It localises to the golgi apparatus. It is found in the trans-Golgi network. Functionally, regulates the GDP/GTP exchange reaction of most Rab proteins by inhibiting the dissociation of GDP from them, and the subsequent binding of GTP to them. Promotes the dissociation of GDP-bound Rab proteins from the membrane and inhibits their activation. Promotes the dissociation of RAB1A, RAB3A, RAB5A and RAB10 from membranes. This is Rab GDP dissociation inhibitor alpha (GDI1) from Pongo pygmaeus (Bornean orangutan).